Here is a 223-residue protein sequence, read N- to C-terminus: Ribose-5-phosphate isomerase A (223 aa).

Residues T29 to T32, D82 to D85, and K95 to G98 contribute to the substrate site. The active-site Proton acceptor is the E104. K122 contacts substrate.

Belongs to the ribose 5-phosphate isomerase family. Homodimer.

The catalysed reaction is aldehydo-D-ribose 5-phosphate = D-ribulose 5-phosphate. It participates in carbohydrate degradation; pentose phosphate pathway; D-ribose 5-phosphate from D-ribulose 5-phosphate (non-oxidative stage): step 1/1. In terms of biological role, catalyzes the reversible conversion of ribose-5-phosphate to ribulose 5-phosphate. The protein is Ribose-5-phosphate isomerase A of Neisseria meningitidis serogroup C (strain 053442).